Consider the following 594-residue polypeptide: Zinc finger protein 37 (594 aa).

Positions 1 to 253 (MATSEPAESD…KPEKAPGSGK (253 aa)) are disordered. A Phosphothreonine modification is found at Thr-3. Residues 3–74 (TSEPAESDAV…GKKASPSSLK (72 aa)) enclose the KRAB domain. Ser-9 is subject to Phosphoserine. The span at 10–33 (DAVRAKEWEQLEPVQRDVYKDTKL) shows a compositional bias: basic and acidic residues. Residues 34–46 (ENCSNPASMGNQD) show a composition bias toward polar residues. Residues 89-111 (QQDDEHREEKQKSQSKLTKEVTL) are compositionally biased toward basic and acidic residues. A compositionally biased stretch (polar residues) spans 145–158 (KSSSRGKNSNQNSD). Basic and acidic residues-rich tracts occupy residues 159–172 (SLKKKPDTANDHRK) and 181–234 (VNKD…TGEK). 12 consecutive C2H2-type zinc fingers follow at residues 255–277 (YECNHCGKVLSHKQGLLDHQRTH), 283–305 (YECNECGIAFSQKSHLVVHQRTH), 311–324 (YECEQCGKAHGHKH), 339–361 (YKCNECGKTFRHSSNLMQHLRSH), 367–389 (YECKECGKSFRYNSSLTEHVRTH), 395–417 (YECNECGKAFKYGSSLTKHMRIH), 423–445 (FECNECGKTFSKKSHLVIHQRTH), 451–473 (YKCDECGKAFGHSSSLTYHMRTH), 479–501 (FECNQCGKAFKQIEGLTQHQRVH), 507–529 (YECVECGKAFSQKSHLIVHQRTH), 535–557 (FECYECGKAFNAKSQLVIHQRSH), and 563–585 (YECIECGKAFKQNASLTKHMKIH).

It belongs to the krueppel C2H2-type zinc-finger protein family. As to expression, expressed in testis and brain.

The protein resides in the nucleus. May have a role in regulating spermiogenesis. This is Zinc finger protein 37 (Zfp37) from Mus musculus (Mouse).